Consider the following 379-residue polypeptide: Queuine tRNA-ribosyltransferase (379 aa).

The active-site Proton acceptor is Asp-96. Substrate-binding positions include Asp-96 to Phe-100, Asp-150, Gln-196, and Gly-223. An RNA binding region spans residues Gly-254–Tyr-260. Asp-273 functions as the Nucleophile in the catalytic mechanism. Cys-311, Cys-313, Cys-316, and His-342 together coordinate Zn(2+).

It belongs to the queuine tRNA-ribosyltransferase family. As to quaternary structure, homodimer. Within each dimer, one monomer is responsible for RNA recognition and catalysis, while the other monomer binds to the replacement base PreQ1. It depends on Zn(2+) as a cofactor.

It carries out the reaction 7-aminomethyl-7-carbaguanine + guanosine(34) in tRNA = 7-aminomethyl-7-carbaguanosine(34) in tRNA + guanine. It functions in the pathway tRNA modification; tRNA-queuosine biosynthesis. Catalyzes the base-exchange of a guanine (G) residue with the queuine precursor 7-aminomethyl-7-deazaguanine (PreQ1) at position 34 (anticodon wobble position) in tRNAs with GU(N) anticodons (tRNA-Asp, -Asn, -His and -Tyr). Catalysis occurs through a double-displacement mechanism. The nucleophile active site attacks the C1' of nucleotide 34 to detach the guanine base from the RNA, forming a covalent enzyme-RNA intermediate. The proton acceptor active site deprotonates the incoming PreQ1, allowing a nucleophilic attack on the C1' of the ribose to form the product. After dissociation, two additional enzymatic reactions on the tRNA convert PreQ1 to queuine (Q), resulting in the hypermodified nucleoside queuosine (7-(((4,5-cis-dihydroxy-2-cyclopenten-1-yl)amino)methyl)-7-deazaguanosine). This chain is Queuine tRNA-ribosyltransferase, found in Treponema denticola (strain ATCC 35405 / DSM 14222 / CIP 103919 / JCM 8153 / KCTC 15104).